The following is a 289-amino-acid chain: D-alanine aminotransferase (289 aa).

Residue Tyr31 participates in substrate binding. Arg50 contacts pyridoxal 5'-phosphate. Positions 99 and 101 each coordinate substrate. Residue Lys147 is the Proton acceptor of the active site. Lys147 bears the N6-(pyridoxal phosphate)lysine mark. Glu179 provides a ligand contact to pyridoxal 5'-phosphate.

The protein belongs to the class-IV pyridoxal-phosphate-dependent aminotransferase family. As to quaternary structure, homodimer. The cofactor is pyridoxal 5'-phosphate.

It catalyses the reaction D-alanine + 2-oxoglutarate = D-glutamate + pyruvate. Its function is as follows. Acts on the D-isomers of alanine, leucine, aspartate, glutamate, aminobutyrate, norvaline and asparagine. The enzyme transfers an amino group from a substrate D-amino acid to the pyridoxal phosphate cofactor to form pyridoxamine and an alpha-keto acid in the first half-reaction. The second half-reaction is the reverse of the first, transferring the amino group from the pyridoxamine to a second alpha-keto acid to form the product D-amino acid via a ping-pong mechanism. This is an important process in the formation of D-alanine and D-glutamate, which are essential bacterial cell wall components. The chain is D-alanine aminotransferase (dat) from Listeria monocytogenes serotype 4b (strain F2365).